The chain runs to 72 residues: Prokaryotic ubiquitin-like protein Pup (72 aa).

The span at Met-1–Gln-10 shows a compositional bias: gly residues. The tract at residues Met-1–Asp-45 is disordered. A coiled-coil region spans residues Gly-9–Glu-60. An ARC ATPase binding region spans residues Gln-28–Phe-66. The segment covering Glu-31–Asp-42 has biased composition (basic and acidic residues). Residue Glu-72 forms an Isoglutamyl lysine isopeptide (Glu-Lys) (interchain with K-? in acceptor proteins) linkage.

The protein belongs to the prokaryotic ubiquitin-like protein family. In terms of assembly, strongly interacts with the proteasome-associated ATPase ARC through a hydrophobic interface; the interacting region of Pup lies in its C-terminal half. There is one Pup binding site per ARC hexamer ring.

Its pathway is protein degradation; proteasomal Pup-dependent pathway. In terms of biological role, protein modifier that is covalently attached to lysine residues of substrate proteins, thereby targeting them for proteasomal degradation. The tagging system is termed pupylation. The chain is Prokaryotic ubiquitin-like protein Pup from Streptomyces avermitilis (strain ATCC 31267 / DSM 46492 / JCM 5070 / NBRC 14893 / NCIMB 12804 / NRRL 8165 / MA-4680).